We begin with the raw amino-acid sequence, 135 residues long: Fluoride-specific ion channel FluC 1 (135 aa).

4 consecutive transmembrane segments (helical) span residues L7–L27, G32–M52, L65–V85, and W96–L116. Residues G75 and T78 each contribute to the Na(+) site.

Belongs to the fluoride channel Fluc/FEX (TC 1.A.43) family.

It localises to the cell membrane. It carries out the reaction fluoride(in) = fluoride(out). Na(+) is not transported, but it plays an essential structural role and its presence is essential for fluoride channel function. In terms of biological role, fluoride-specific ion channel. Important for reducing fluoride concentration in the cell, thus reducing its toxicity. The chain is Fluoride-specific ion channel FluC 1 from Latilactobacillus sakei subsp. sakei (strain 23K) (Lactobacillus sakei subsp. sakei).